Consider the following 756-residue polypeptide: DNA mismatch repair protein Mlh1 (756 aa).

Ser-2 is subject to N-acetylserine. Lys-33 is modified (N6-acetyllysine). ATP is bound by residues Asn-38, Asp-63, 82–84, and 100–104; these read TSK and RGEAL. Residues Lys-241 and Lys-361 each carry the N6-acetyllysine modification. 2 disordered regions span residues 355–378 and 400–491; these read PSGE…SDKV and LSKP…KEMT. The segment covering 362 to 375 has biased composition (low complexity); it reads STTSLTSSSTSGSS. Lys-377 is modified (N6-acetyllysine). Positions 410–650 are interaction with EXO1; it reads AIVTEDKTDI…LLIDNYVPPL (241 aa). Polar residues predominate over residues 443-457; the sequence is KNQSLEGDTTKGTSE. Positions 471-474 match the Nuclear localization signal motif; that stretch reads KRHR. Ser-477 bears the Phosphoserine mark.

The protein belongs to the DNA mismatch repair MutL/HexB family. In terms of assembly, component of the DNA mismatch repair (MMR) complex composed at least of MSH2, MSH3, MSH6, PMS1 and MLH1. Heterodimer of MLH1 and PMS2 (MutL alpha), MLH1 and PMS1 (MutL beta) or MLH1 and MLH3 (MutL gamma). Forms a ternary complex with MutS alpha (MSH2-MSH6) or MutS beta (MSH2-MSH3). Part of the BRCA1-associated genome surveillance complex (BASC), which contains BRCA1, MSH2, MSH6, MLH1, ATM, BLM, PMS2 and the RAD50-MRE11-NBS1 protein complex. This association could be a dynamic process changing throughout the cell cycle and within subnuclear domains. Interacts with MCM9; the interaction recruits MLH1 to chromatin. Interacts with MCM8. Interacts with PMS2; this interaction promotes MLH1 stability. Interacts with MBD4. Interacts with EXO1. Interacts with MTMR15/FAN1. Post-translationally, acetylated. Deacetylated by HDAC6 which prevents the MutL alpha complex, formed by the MLH1-PMS2 heterodimer, from being recruited to the MutS alpha complex, formed by the MSH2-MSH6 heterodimer, leading to tolerance of DNA damage. In terms of processing, ubiquitinated by UBR4; leading to proteasomal degradation. This ubiquitination is counteracted by the deubiquitinase USP5. In terms of tissue distribution, colon, lymphocytes, breast, lung, spleen, testis, prostate, thyroid, gall bladder and heart.

It localises to the nucleus. It is found in the chromosome. Its function is as follows. Heterodimerizes with PMS2 to form MutL alpha, a component of the post-replicative DNA mismatch repair system (MMR). DNA repair is initiated by MutS alpha (MSH2-MSH6) or MutS beta (MSH2-MSH3) binding to a dsDNA mismatch, then MutL alpha is recruited to the heteroduplex. Assembly of the MutL-MutS-heteroduplex ternary complex in presence of RFC and PCNA is sufficient to activate endonuclease activity of PMS2. It introduces single-strand breaks near the mismatch and thus generates new entry points for the exonuclease EXO1 to degrade the strand containing the mismatch. DNA methylation would prevent cleavage and therefore assure that only the newly mutated DNA strand is going to be corrected. MutL alpha (MLH1-PMS2) interacts physically with the clamp loader subunits of DNA polymerase III, suggesting that it may play a role to recruit the DNA polymerase III to the site of the MMR. Also implicated in DNA damage signaling, a process which induces cell cycle arrest and can lead to apoptosis in case of major DNA damages. Heterodimerizes with MLH3 to form MutL gamma which plays a role in meiosis. This is DNA mismatch repair protein Mlh1 (MLH1) from Homo sapiens (Human).